Consider the following 505-residue polypeptide: Calcium/calmodulin-dependent protein kinase kinase 1 (505 aa).

Residues 27-66 are disordered; that stretch reads HLEEAEEGPEPASNGVDPPPRARAASVIPGSASRPTPVRP. Phosphoserine occurs at positions 67 and 74. Asymmetric dimethylarginine is present on R78. Residue S100 is modified to Phosphoserine. A Phosphothreonine modification is found at T108. The Protein kinase domain maps to 128-409; it reads YKLQSEIGKG…VSDIKLHPWV (282 aa). Residues 134–142 and K157 contribute to the ATP site; that span reads IGKGAYGVV. Positions 167–189 are RP domain; that stretch reads QYGFPRRPPPRGSQAPQGGPAKQ. D275 serves as the catalytic Proton acceptor. The interval 435–440 is autoinhibitory domain; that stretch reads KNSVKL. The tract at residues 438–463 is calmodulin-binding; the sequence is VKLIPSWTTVILVKSMLRKRSFGNPF. 3 positions are modified to phosphoserine: S458, S475, and S492. The tract at residues 460 to 505 is disordered; sequence GNPFEPQARREERSMSAPGNLLLKEGCGEGGKSPELPGVQEDEAAS.

This sequence belongs to the protein kinase superfamily. Ser/Thr protein kinase family. In terms of assembly, interacts with CAMK4 and calmodulin. In terms of processing, appears to be autophosphorylated. Phosphorylated at multiple sites by PRCAKA/PKA. Phosphorylation of Ser-458 is blocked upon binding to Ca(2+)/calmodulin. May be phosphorylated by CAMK1 and CAMK4. In terms of tissue distribution, mostly expressed in the brain with higher levels in cortex and hippocampus. Lower expression levels were detected in striatum, nucleus accumbens and cerebellum (at protein level). Abundant in forebrain, weaker in cerebellum and also detected in thymus and spleen.

It is found in the cytoplasm. The protein localises to the nucleus. It carries out the reaction L-seryl-[protein] + ATP = O-phospho-L-seryl-[protein] + ADP + H(+). It catalyses the reaction L-threonyl-[protein] + ATP = O-phospho-L-threonyl-[protein] + ADP + H(+). With respect to regulation, activated by Ca(2+)/calmodulin. Binding of calmodulin may relieve intrasteric autoinhibition. Partially inhibited upon phosphorylation by PRCAKA/PKA. May be regulated through phosphorylation by CAMK1 and CAMK4. Calcium/calmodulin-dependent protein kinase that belongs to a proposed calcium-triggered signaling cascade involved in a number of cellular processes. Phosphorylates CAMK1, CAMK1D, CAMK1G and CAMK4. Involved in regulating cell apoptosis. Promotes cell survival by phosphorylating AKT1/PKB that inhibits pro-apoptotic BAD/Bcl2-antagonist of cell death. This is Calcium/calmodulin-dependent protein kinase kinase 1 (Camkk1) from Rattus norvegicus (Rat).